The chain runs to 209 residues: Protease (209 aa).

Residues His-55, Asp-72, and Cys-123 contribute to the active site.

The protein belongs to the peptidase C5 family. In terms of assembly, interacts with protease cofactor pVI-C; this interaction is necessary for protease activation.

Its subcellular location is the virion. The protein resides in the host nucleus. The enzyme catalyses Cleaves proteins of the adenovirus and its host cell at two consensus sites: -Yaa-Xaa-Gly-Gly-|-Xaa- and -Yaa-Xaa-Gly-Xaa-|-Gly- (in which Yaa is Met, Ile or Leu, and Xaa is any amino acid).. Its activity is regulated as follows. Requires DNA and protease cofactor for maximal activation. Inside nascent virions, becomes partially activated by binding to the viral DNA, allowing it to cleave the cofactor that binds to the protease and fully activates it. Actin, like the viral protease cofactor, seems to act as a cofactor in the cleavage of cytokeratin 18 and of actin itself. In terms of biological role, cleaves viral precursor proteins (pTP, pIIIa, pVI, pVII, pVIII, and pX) inside newly assembled particles giving rise to mature virions. Protease complexed to its cofactor slides along the viral DNA to specifically locate and cleave the viral precursors. Mature virions have a weakened organization compared to the unmature virions, thereby facilitating subsequent uncoating. Without maturation, the particle lacks infectivity and is unable to uncoat. Late in adenovirus infection, in the cytoplasm, may participate in the cytoskeleton destruction. Cleaves host cell cytoskeletal keratins K7 and K18. The chain is Protease from Human adenovirus D serotype 17 (HAdV-17).